Reading from the N-terminus, the 596-residue chain is NADH-quinone oxidoreductase subunit C/D (596 aa).

The segment at Met1 to Gln186 is NADH dehydrogenase I subunit C. Residues Asp210–Arg596 form an NADH dehydrogenase I subunit D region.

This sequence in the N-terminal section; belongs to the complex I 30 kDa subunit family. It in the C-terminal section; belongs to the complex I 49 kDa subunit family. As to quaternary structure, NDH-1 is composed of 13 different subunits. Subunits NuoB, CD, E, F, and G constitute the peripheral sector of the complex.

The protein resides in the cell inner membrane. It carries out the reaction a quinone + NADH + 5 H(+)(in) = a quinol + NAD(+) + 4 H(+)(out). In terms of biological role, NDH-1 shuttles electrons from NADH, via FMN and iron-sulfur (Fe-S) centers, to quinones in the respiratory chain. The immediate electron acceptor for the enzyme in this species is believed to be ubiquinone. Couples the redox reaction to proton translocation (for every two electrons transferred, four hydrogen ions are translocated across the cytoplasmic membrane), and thus conserves the redox energy in a proton gradient. The chain is NADH-quinone oxidoreductase subunit C/D from Salmonella dublin (strain CT_02021853).